We begin with the raw amino-acid sequence, 273 residues long: 4-hydroxy-tetrahydrodipicolinate reductase (273 aa).

NAD(+) contacts are provided by residues glycine 12–methionine 17 and glutamate 38. Arginine 39 provides a ligand contact to NADP(+). NAD(+) is bound by residues glycine 102 to threonine 104 and alanine 126 to phenylalanine 129. Catalysis depends on histidine 159, which acts as the Proton donor/acceptor. Residue histidine 160 participates in (S)-2,3,4,5-tetrahydrodipicolinate binding. Lysine 163 serves as the catalytic Proton donor. Glycine 169–threonine 170 lines the (S)-2,3,4,5-tetrahydrodipicolinate pocket.

Belongs to the DapB family. In terms of assembly, homotetramer.

It localises to the cytoplasm. The catalysed reaction is (S)-2,3,4,5-tetrahydrodipicolinate + NAD(+) + H2O = (2S,4S)-4-hydroxy-2,3,4,5-tetrahydrodipicolinate + NADH + H(+). It catalyses the reaction (S)-2,3,4,5-tetrahydrodipicolinate + NADP(+) + H2O = (2S,4S)-4-hydroxy-2,3,4,5-tetrahydrodipicolinate + NADPH + H(+). The protein operates within amino-acid biosynthesis; L-lysine biosynthesis via DAP pathway; (S)-tetrahydrodipicolinate from L-aspartate: step 4/4. Functionally, catalyzes the conversion of 4-hydroxy-tetrahydrodipicolinate (HTPA) to tetrahydrodipicolinate. The chain is 4-hydroxy-tetrahydrodipicolinate reductase from Proteus mirabilis (strain HI4320).